The chain runs to 1771 residues: Replicase polyprotein (1771 aa).

Residues 1 to 29 (MSFQQTNNNATNNINSLEELAAQELIAAQ) adopt a coiled-coil conformation. Positions 16–25 (SLEELAAQEL) are BC-box. An interaction with and inhibition of host AGO2 region spans residues 106–114 (PEHRYGSTF). An SF3 helicase domain is found at 482–656 (AKSLYEQVLL…QEKSIWVRNA (175 aa)). Residue 510 to 517 (GESGIGKT) coordinates ATP. The tract at residues 919 to 942 (VEVGSSGDSKTQKQRNTKVEVGKE) is disordered. In terms of domain architecture, Peptidase C3 spans 954 to 1201 (DPAAHALVLD…YACPLTQEAI (248 aa)). Residues histidine 1003, aspartate 1063, and cysteine 1162 each act as for picornain 3C-like protease activity in the active site. Positions 1385-1413 (GEQYDFTSQRAQELRRDVEELIDNCAKGI) form a coiled coil. The RdRp catalytic domain maps to 1495-1634 (NKVIAGDFGN…NISDRVVEWF (140 aa)).

Interacts with host AGO2; this interaction leads to AGO2 degradation via an E3 ubiquitin ligase-dependent pathway and may block the RNA-induced silencing complexes (RISC) activity. In terms of processing, might be expressed through a ribosomal skip from one codon to the next without formation of a peptide bond.

The protein resides in the host cytoplasm. Its subcellular location is the host perinuclear region. The enzyme catalyses RNA(n) + a ribonucleoside 5'-triphosphate = RNA(n+1) + diphosphate. Its function is as follows. Suppressor of RNA-mediated gene silencing, an antiviral defense mechanism of insect cells. Inhibits siRNA function through the direct enzymatic inactivation of host AGO2, but does not interfere with miRNA pathway. Facilitates viral replication via the recruitment of a cellular ubiquitin ligase complex that promotes host AGO2 degradation. Inhibits the integrated stress response (ISR) in the infected cell possiby by degrading host Nup358. Stress granule formation is thus inhibited, which allows protein synthesis and viral replication. Does not bind to dsRNA or siRNA. Functionally, replicates the genomic and antigenomic RNA. This is Replicase polyprotein from Teleogryllus oceanicus (black field cricket).